Consider the following 238-residue polypeptide: uncharacterized protein (238 aa).

This is an uncharacterized protein from Acidianus filamentous virus 2 (isolate Italy/Pozzuoli) (AFV-2).